Here is a 554-residue protein sequence, read N- to C-terminus: (E)-beta-caryophyllene synthase (554 aa).

Mn(2+) contacts are provided by aspartate 313 and aspartate 317. Residues 313-317 carry the DDXXD motif motif; that stretch reads DDTYD. Homodimerization regions lie at residues 319–325 and 391–427; these read YGTLDEL and EAQWFFSKYKPTMQEYMKVALLSSGYMMMTINSLAVI. Mn(2+) contacts are provided by aspartate 457 and glutamate 465.

This sequence belongs to the terpene synthase family. In terms of assembly, homodimer. Requires Mn(2+) as cofactor. The cofactor is Mg(2+). Expressed in peltate glandular trichomes. Present at low levels in flowers, leaves and stems.

It catalyses the reaction (2E,6E)-farnesyl diphosphate = (-)-(E)-beta-caryophyllene + diphosphate. It carries out the reaction (2E,6E)-farnesyl diphosphate = alpha-humulene + diphosphate. It participates in secondary metabolite biosynthesis; terpenoid biosynthesis. Functionally, involved in the biosynthesis of phenolic sesquiterpenes natural products. Sesquiterpene synthase converting (2E,6E)-farnesyl diphosphate (FPP) to (E)-beta-caryophyllene and alpha-humulene. This is (E)-beta-caryophyllene synthase from Origanum vulgare (Wild marjoram).